The primary structure comprises 1000 residues: Chloride channel protein D (1000 aa).

Composition is skewed to low complexity over residues 1–16 and 38–60; these read MSSG…NDGN and NNNN…NSSV. The interval 1-90 is disordered; sequence MSSGNPFDNG…SYDDDGDDEE (90 aa). Residues 1–256 lie on the Cytoplasmic side of the membrane; it reads MSSGNPFDNG…LASDHEVLRW (256 aa). The segment covering 71–80 has biased composition (basic and acidic residues); sequence RIQEEERLTE. The next 10 membrane-spanning stretches (helical) occupy residues 257-277, 290-310, 416-436, 442-462, 493-513, 534-554, 678-698, 710-730, 733-753, and 772-792; these read IVSL…HACV, AVLE…NTLL, GAGA…LFSL, FWSI…TYTM, IIPF…FTWI, LEVF…PLFF, LGLW…AYTA, MLVI…HILG, VSID…GGVS, and YLLP…ALIH. CBS domains lie at 824-881 and 926-984; these read MAKK…ISDV and MNLT…YREL.

Belongs to the chloride channel (TC 2.A.49) family.

The protein localises to the membrane. In terms of biological role, voltage-gated chloride channel. Chloride channels may have several functions including the regulation of cell volume, membrane potential stabilization and signal transduction. Required for normal aggregation. In Dictyostelium discoideum (Social amoeba), this protein is Chloride channel protein D (clcD).